The chain runs to 160 residues: Ubiquitin-like protein 4A (160 aa).

One can recognise a Ubiquitin-like domain in the interval 1 to 76; the sequence is MQLTVKALQG…LNLVVKPLEK (76 aa). Residue Lys48 forms a Glycyl lysine isopeptide (Lys-Gly) (interchain with G-Cter in ubiquitin) linkage. A required and sufficient for interaction with BAG6 region spans residues 99–141; sequence WQLIAKVLARHFSAADASRVLDQLQRDYERSLSRLTLDDIERL.

As to quaternary structure, component of the BAG6/BAT3 complex, at least composed of BAG6, UBL4A and GET4/TRC35. Interacts with BAG6; the interaction is direct and required for UBL4A protein stability. Interacts with USP13; may be indirect via BAG6. Polyubiquitinated. Ubiquitination by AMFR and deubiquitination by USP13 may regulate the interaction between the BAG6/BAT complex and SGTA and therefore may regulate client proteins fate.

It is found in the cytoplasm. The protein localises to the cytosol. Its subcellular location is the nucleus. Functionally, as part of a cytosolic protein quality control complex, the BAG6/BAT3 complex, maintains misfolded and hydrophobic patches-containing proteins in a soluble state and participates in their proper delivery to the endoplasmic reticulum or alternatively can promote their sorting to the proteasome where they undergo degradation. The BAG6/BAT3 complex is involved in the post-translational delivery of tail-anchored/type II transmembrane proteins to the endoplasmic reticulum membrane. Recruited to ribosomes, it interacts with the transmembrane region of newly synthesized tail-anchored proteins and together with SGTA and ASNA1 mediates their delivery to the endoplasmic reticulum. Client proteins that cannot be properly delivered to the endoplasmic reticulum are ubiquitinated and sorted to the proteasome. Similarly, the BAG6/BAT3 complex also functions as a sorting platform for proteins of the secretory pathway that are mislocalized to the cytosol either delivering them to the proteasome for degradation or to the endoplasmic reticulum. The BAG6/BAT3 complex also plays a role in the endoplasmic reticulum-associated degradation (ERAD), a quality control mechanism that eliminates unwanted proteins of the endoplasmic reticulum through their retrotranslocation to the cytosol and their targeting to the proteasome. It maintains these retrotranslocated proteins in an unfolded yet soluble state condition in the cytosol to ensure their proper delivery to the proteasome. The polypeptide is Ubiquitin-like protein 4A (UBL4A) (Rhinolophus ferrumequinum (Greater horseshoe bat)).